The following is a 103-amino-acid chain: UPF0145 protein BCE_1095 (103 aa).

It belongs to the UPF0145 family.

The chain is UPF0145 protein BCE_1095 from Bacillus cereus (strain ATCC 10987 / NRS 248).